Here is a 144-residue protein sequence, read N- to C-terminus: Large ribosomal subunit protein uL16 (144 aa).

This sequence belongs to the universal ribosomal protein uL16 family. As to quaternary structure, part of the 50S ribosomal subunit.

In terms of biological role, binds 23S rRNA and is also seen to make contacts with the A and possibly P site tRNAs. This Novosphingobium aromaticivorans (strain ATCC 700278 / DSM 12444 / CCUG 56034 / CIP 105152 / NBRC 16084 / F199) protein is Large ribosomal subunit protein uL16.